We begin with the raw amino-acid sequence, 431 residues long: Selenocysteine lyase (431 aa).

At Lys239 the chain carries N6-(pyridoxal phosphate)lysine. The active-site S-selanylcysteine intermediate is the Cys367.

Belongs to the class-V pyridoxal-phosphate-dependent aminotransferase family. In terms of assembly, homodimer. Pyridoxal 5'-phosphate serves as cofactor.

The protein resides in the cytoplasm. It is found in the cytosol. It carries out the reaction L-selenocysteine + AH2 = hydrogenselenide + L-alanine + A + H(+). Its function is as follows. Catalyzes the decomposition of L-selenocysteine to L-alanine and elemental selenium. This chain is Selenocysteine lyase (scly), found in Xenopus tropicalis (Western clawed frog).